A 161-amino-acid polypeptide reads, in one-letter code: Regulator of ribonuclease activity A (161 aa).

The protein belongs to the RraA family. In terms of assembly, homotrimer. Binds to both RNA-binding sites in the C-terminal region of Rne and to RhlB.

The protein localises to the cytoplasm. Its function is as follows. Globally modulates RNA abundance by binding to RNase E (Rne) and regulating its endonucleolytic activity. Can modulate Rne action in a substrate-dependent manner by altering the composition of the degradosome. Modulates RNA-binding and helicase activities of the degradosome. The protein is Regulator of ribonuclease activity A of Serratia proteamaculans (strain 568).